The following is a 324-amino-acid chain: T-cell acute lymphocytic leukemia protein 1 homolog (324 aa).

Residues 1–49 form a disordered region; the sequence is MMEKLKSEQFPLSPSAEGCASPPRGDGDARGKQEGTTAETGEHRLPEEL. The bHLH domain occupies 185–237; it reads VRRIFTNSRERWRQQNVNGAFAELRKLIPTHPPDKKLSKNEILRLAMKYINFL. The disordered stretch occupies residues 276 to 324; the sequence is SPNSSCGSLLDGDASPESFTEDQDSSVESRPSARGLHHSSLPLDGNAQR.

In terms of tissue distribution, expressed in hemopoietic and endothelial lineages. Isoform beta emerges first, expressing in the entire anterior and posterior lateral mesoderm (ALM and PLM respectively), and in the ventral wall of the dorsal aorta, where definitive hemopoiesis begins. Isoform alpha expresses later as two pairs of stripes in the PLM and ALM, and becomes restricted to the intermediate cell mass (ICM) by the 18-somite stage. The ICM is the key site of primitive hemopoiesis, giving rise to the erythroid lineage. Also expressed in all stages of endocardial cell migration and in the developing midbrain, hindbrain and spinal cord. In adults, expressed in the main hemopoietic organs, namely the kidney (where isoform alpha is the predominant isoform) and the spleen. Also expressed in the liver, gill and gonads.

The protein localises to the nucleus. Its function is as follows. Transcription factor that plays a pivotal role in hemopoietic and endothelial development, acting synergistically with lmo2 and downstream of clo. Specifies mesodermal precursors to a hemangioblast cell fate. Hemangioblasts are bipotential precursors of blood and endothelium, and in the absence of hemopoietic induction cues such as gata1, tal1/scl-lmo2-induced hemangioblasts differentiate into endothelial cells. Isoform alpha and isoform beta are redundant for the initiation of primitive hemopoiesis but have distinct roles in the regulation of primitive erythroid differentiation and definitive hemopoietic stem cell specification, most likely due to differences in expression levels. Specification of definitive hemopoietic stem cells requires isoform beta. DNA binding is required for erythroid maturation, but not for its other hemopoietic functions. Endothelial roles include development of the dorsal aorta, the site of definitive hemopoiesis in the embryo. Required for angiogenesis but not angioblast specification. Has an additional role in endocardium formation during heart development. May play a role in central nervous system development. The sequence is that of T-cell acute lymphocytic leukemia protein 1 homolog from Danio rerio (Zebrafish).